A 1197-amino-acid polypeptide reads, in one-letter code: Sensor protein EvgS (1197 aa).

Residues Met-1–Ala-21 form the signal peptide. Residues Asp-22 to Arg-325 are Cytoplasmic-facing. Residues Gly-326–Ile-346 form a helical membrane-spanning segment. Residues Thr-347 to Tyr-537 are Periplasmic-facing. Residues Ile-538–Leu-558 form a helical membrane-spanning segment. The Cytoplasmic portion of the chain corresponds to Arg-559 to Asn-1197. The 221-residue stretch at Thr-718–Ile-938 folds into the Histidine kinase domain. Position 721 is a phosphohistidine; by autocatalysis (His-721). Positions Ser-960 to His-1074 constitute a Response regulatory domain. At Asp-1009 the chain carries 4-aspartylphosphate. Residues Asp-1098–Asn-1197 enclose the HPt domain. Position 1137 is a phosphohistidine (His-1137).

Post-translationally, activation requires a sequential transfer of a phosphate group from a His in the primary transmitter domain, to an Asp in the receiver domain and to a His in the secondary transmitter domain.

The protein localises to the cell inner membrane. The catalysed reaction is ATP + protein L-histidine = ADP + protein N-phospho-L-histidine.. Its function is as follows. Member of the two-component regulatory system EvgS/EvgA. Phosphorylates EvgA via a four-step phosphorelay in response to environmental signals. The sequence is that of Sensor protein EvgS (evgS) from Escherichia coli O157:H7.